The primary structure comprises 390 residues: GLH-binding kinase 1 (390 aa).

The 301-residue stretch at 38–338 (YVNLSFLNAG…VEDALNHPYV (301 aa)) folds into the Protein kinase domain. ATP contacts are provided by residues 44–52 (LNAGAQGTV) and lysine 67. Aspartate 164 acts as the Proton acceptor in catalysis. The residue at position 198 (serine 198) is a Phosphoserine. The residue at position 200 (tyrosine 200) is a Phosphotyrosine.

This sequence belongs to the protein kinase superfamily. CMGC Ser/Thr protein kinase family. MAP kinase subfamily. As to quaternary structure, interacts with glh-1, glh-2 (via C-terminus), glh-3 (via C-terminus) and glh-4 (via C-terminus). Interacts with csn-5; the interaction may prevent glh-1 degradation induced by kgb-1. Interacts with fos-1. It depends on Mg(2+) as a cofactor. In terms of processing, may be phosphorylated by mek-1 on Ser-198 and/or Tyr-200. Phosphorylation is induced upon Cu(2+) and arsenite-mediated cell stimulation and by fasting. Expressed in somatic and germline tissues.

It localises to the cytoplasm. The catalysed reaction is L-seryl-[protein] + ATP = O-phospho-L-seryl-[protein] + ADP + H(+). It carries out the reaction L-threonyl-[protein] + ATP = O-phospho-L-threonyl-[protein] + ADP + H(+). Activated by mek-1 mediated phosphorylation. No differences in basal activation between larvae and adults. Inhibited by phosphatase vhp-1. Functionally, mitogen-activated protein kinase which is an essential component of the JNK pathway composed of mlk-1, mek-1 and kgb-1. Phosphorylates the transcription factor fos-1 which prevents fos-1 dimerization and promoter binding and results in activation of target genes including F53A9.2/kreg-1 and lys-3/kreg-2. Phosphorylates jun-1 and activates the AP-1 transcription factor which is a heterodimer of jun-1 and fos-1. Phosphorylates glh-1 in vitro which may play a role in controlling glh-1 protein levels in the germline by targeting it for degradation by the proteasome. Required for oogenesis and probably also for spermatogenesis. Involved in the response to environmental stress such as heavy metals, infection and protein folding stress in an age-dependent manner. In larvae, has a protective role which becomes detrimental in adults. May control susceptibility to infection, heavy metal stress and premature lethality by regulating daf-16 cellular localization. Involved in the transcriptional response to bacterial pore-forming toxins and to fasting. Required for fasting-induced longevity. Involved in axon regeneration after injury downstream of tyrosine receptor svh-2. In Caenorhabditis elegans, this protein is GLH-binding kinase 1.